A 1985-amino-acid polypeptide reads, in one-letter code: Treslin (1985 aa).

Disordered regions lie at residues A574–T609, E791–K858, I894–E974, R999–S1033, V1072–R1156, V1184–Y1243, H1849–S1875, and F1938–R1966. A compositionally biased stretch (basic residues) spans R823 to R837. Positions S964 to E974 are enriched in low complexity. Polar residues-rich tracts occupy residues R999–Q1026 and S1085–N1097. Residues T1105 to R1114 are compositionally biased toward low complexity. 2 stretches are compositionally biased toward basic and acidic residues: residues K1144 to R1156 and Q1191 to T1200. A compositionally biased stretch (polar residues) spans P1201–P1224. The span at R1225–R1238 shows a compositional bias: basic and acidic residues.

It belongs to the treslin family. In terms of assembly, interacts with topbp1 (via BRCT domains); interaction is cdk2-dependent. Component of the replisome complex. Post-translationally, phosphorylated during interphase. Cdk2 promotes both phosphorylation and formation of a ticrr-topbp1 complex.

It localises to the nucleus. Its function is as follows. Regulator of DNA replication and S/M and G2/M checkpoints. Regulates the triggering of DNA replication initiation via its interaction with topbp1 by participating in cdk2-mediated loading of cdc45l onto replication origins. Required for the transition from pre-replication complex (pre-RC) to pre-initiation complex (pre-IC). Required to prevent mitotic entry after treatment with ionizing radiation. The chain is Treslin (ticrr) from Xenopus laevis (African clawed frog).